We begin with the raw amino-acid sequence, 704 residues long: Zinc finger protein MSN2 (704 aa).

The disordered stretch occupies residues 84–246 (PSTTDNSLHL…SISNSNSNST (163 aa)). A compositionally biased stretch (basic and acidic residues) spans 91 to 112 (LHLKADSNKNRDARTIENDSEI). The span at 113–133 (KSTNNASGSGANQYTTLTSPY) shows a compositional bias: polar residues. Residues 141–166 (NMNNPLQSPSPSSVPQNPTINPPINT) are compositionally biased toward low complexity. Polar residues-rich tracts occupy residues 167-193 (ASNETNLSPQTSNGNETLISPRAQQHT) and 204-220 (NGANSNLFIDTNPNNLN). Low complexity predominate over residues 228 to 246 (NSDTNSYSNSISNSNSNST). The short motif at 261–269 (SMLDDYVSS) is the 9aaTAD element. A phosphoserine mark is found at Ser-288 and Ser-304. Positions 418–437 (NRVQHKQLTSSHNNSSTNMK) are disordered. Residues 426–437 (TSSHNNSSTNMK) show a composition bias toward polar residues. 2 positions are modified to phosphoserine: Ser-451 and Ser-582. Positions 592-634 (LTNQQNNISSSSVNSTGNGAGVTKERRPSYRRKSMTPSRRSSV) are disordered. Over residues 593 to 608 (TNQQNNISSSSVNSTG) the composition is skewed to low complexity. Phosphoserine is present on Ser-633. 2 C2H2-type zinc fingers span residues 647 to 665 (FHCHICPKSFKRSEHLKRH) and 676 to 698 (FACHICDKKFSRSDNLSQHIKTH).

Interacts with WHI2.

It localises to the cytoplasm. The protein resides in the nucleus. In terms of biological role, positive transcriptional factor that acts as a component of the stress responsive system. Recognizes and binds to the stress response element (STRE) which is involved in the response to various forms of stress (heat, oxidative, osmotic, etc.). Involved in the regulation of the CTT1, DDR2, HSP12 genes. May be regulated via WHI2-PSR1 complex phosphatase activity. The chain is Zinc finger protein MSN2 (MSN2) from Saccharomyces cerevisiae (strain ATCC 204508 / S288c) (Baker's yeast).